We begin with the raw amino-acid sequence, 499 residues long: Protein flp (499 aa).

The next 4 membrane-spanning stretches (helical) occupy residues 6-26, 389-409, 433-453, and 471-491; these read LYFL…IYIT, FNIV…FSAY, LTLC…YLIL, and LTLT…LLIL.

Its subcellular location is the cell membrane. Functionally, its precise function is unknown. Has no penicillin-binding activity and is not involved in methicillin resistance. This chain is Protein flp (flp), found in Staphylococcus aureus (strain MRSA252).